We begin with the raw amino-acid sequence, 340 residues long: Methionine import ATP-binding protein MetN (340 aa).

An ABC transporter domain is found at I5–V243. Residue G40–S47 participates in ATP binding.

The protein belongs to the ABC transporter superfamily. Methionine importer (TC 3.A.1.24) family. As to quaternary structure, the complex is composed of two ATP-binding proteins (MetN), two transmembrane proteins (MetI) and a solute-binding protein (MetQ).

Its subcellular location is the cell membrane. It catalyses the reaction L-methionine(out) + ATP + H2O = L-methionine(in) + ADP + phosphate + H(+). The enzyme catalyses D-methionine(out) + ATP + H2O = D-methionine(in) + ADP + phosphate + H(+). Functionally, part of the ABC transporter complex MetNIQ involved in methionine import. Responsible for energy coupling to the transport system. The protein is Methionine import ATP-binding protein MetN of Leifsonia xyli subsp. xyli (strain CTCB07).